We begin with the raw amino-acid sequence, 267 residues long: uncharacterized protein (267 aa).

A WD repeat occupies 50 to 90; that stretch reads PGLNAVTASKFSPDGRWLLNIADGSGYVQLWDTAKGERVKT.

This is an uncharacterized protein from Deinococcus radiodurans (strain ATCC 13939 / DSM 20539 / JCM 16871 / CCUG 27074 / LMG 4051 / NBRC 15346 / NCIMB 9279 / VKM B-1422 / R1).